A 228-amino-acid chain; its full sequence is MEKGHILIVEDEEKIARVLQLELEYEGYSVTIKHNGTEGLDAAAEGGYSLVLLDVMLPGLSGLEVLRRLRKTDSQTPVILLTARDSIPDKVTGLDIGANDYVTKPFEIEELLARIRAALRQNGTKTEDIGTFLTYDDLRVNEKTREVRRGDKEVELTPREFDLLVYMLKHPQQVLTREQILSSVWGFDYIGDTNVVDVYIRYIRKKLDYPYEKQLIHTIRGVGYAIKG.

In terms of domain architecture, Response regulatory spans 5 to 119 (HILIVEDEEK…ELLARIRAAL (115 aa)). Position 54 is a 4-aspartylphosphate (aspartate 54). Positions 130-228 (GTFLTYDDLR…IRGVGYAIKG (99 aa)) form a DNA-binding region, ompR/PhoB-type.

Post-translationally, phosphorylated by YkoH.

It localises to the cytoplasm. Probable member of the two-component regulatory system YkoH/YkoG. This is an uncharacterized protein from Bacillus subtilis (strain 168).